Reading from the N-terminus, the 454-residue chain is Serine/threonine-protein kinase NLK2 (454 aa).

The Protein kinase domain occupies 67 to 356 (PEPDRPIGYG…AKDALAHPYL (290 aa)). ATP-binding positions include 73–81 (IGYGAFGVV) and Lys-96. Asp-193 (proton acceptor) is an active-site residue.

The protein belongs to the protein kinase superfamily. CMGC Ser/Thr protein kinase family. MAP kinase subfamily. In terms of assembly, interacts with sox11, hmgxb4/hmg2l1, rnf138/narf, stat3.1 and mef2a. Mg(2+) serves as cofactor.

The protein localises to the nucleus. Its subcellular location is the cytoplasm. It carries out the reaction L-seryl-[protein] + ATP = O-phospho-L-seryl-[protein] + ADP + H(+). The enzyme catalyses L-threonyl-[protein] + ATP = O-phospho-L-threonyl-[protein] + ADP + H(+). Activated by tyrosine and threonine phosphorylation. Functionally, negatively regulates Wnt/beta-catenin-signaling during development. Plays a role together with sox11 in neural induction during early embryogenesis. Involved in TGFbeta-mediated mesoderm induction in early embryos, acting downstream of map3k7/tak1 to phosphorylate stat3. Augments the rnf138/narf-directed ubiquitination and degradation of tcf/lef by enhancing the association of rnf138/narf and tcf/lef. Phosphorylates mef2a to play a role in anterior neural development, including eye formation. This is Serine/threonine-protein kinase NLK2 (nlk.2) from Xenopus tropicalis (Western clawed frog).